Reading from the N-terminus, the 75-residue chain is RNA-binding protein KhpA (75 aa).

The region spanning S29–I75 is the KH domain.

The protein belongs to the KhpA RNA-binding protein family. As to quaternary structure, forms a complex with KhpB.

The protein resides in the cytoplasm. Its function is as follows. A probable RNA chaperone. Forms a complex with KhpB which binds to cellular RNA and controls its expression. Plays a role in peptidoglycan (PG) homeostasis and cell length regulation. The protein is RNA-binding protein KhpA of Caldanaerobacter subterraneus subsp. tengcongensis (strain DSM 15242 / JCM 11007 / NBRC 100824 / MB4) (Thermoanaerobacter tengcongensis).